Consider the following 274-residue polypeptide: 2,3,4,5-tetrahydropyridine-2,6-dicarboxylate N-succinyltransferase (274 aa).

Substrate-binding residues include R104 and D141.

The protein belongs to the transferase hexapeptide repeat family. Homotrimer.

It localises to the cytoplasm. The enzyme catalyses (S)-2,3,4,5-tetrahydrodipicolinate + succinyl-CoA + H2O = (S)-2-succinylamino-6-oxoheptanedioate + CoA. Its pathway is amino-acid biosynthesis; L-lysine biosynthesis via DAP pathway; LL-2,6-diaminopimelate from (S)-tetrahydrodipicolinate (succinylase route): step 1/3. The polypeptide is 2,3,4,5-tetrahydropyridine-2,6-dicarboxylate N-succinyltransferase (Escherichia coli O6:H1 (strain CFT073 / ATCC 700928 / UPEC)).